The sequence spans 152 residues: Nucleoplasmin-like protein (152 aa).

The span at 109 to 128 (EVVDMEEDDEEDDVAEDEED) shows a compositional bias: acidic residues. The disordered stretch occupies residues 109–152 (EVVDMEEDDEEDDVAEDEEDEHPKKRAKIENAADGKNAKNNKKK). Over residues 136–145 (KIENAADGKN) the composition is skewed to basic and acidic residues.

This sequence belongs to the nucleoplasmin family. In terms of assembly, decamer formed by two pentameric rings associated in a head-to-head fashion.

Its subcellular location is the nucleus. In terms of biological role, binds to core histones and functions in the ATP-facilitated assembly of approximately regularly spaced nucleosomal arrays. May participate in parallel with other histone-binding proteins such as NAP-1. Functionally, inactive for chromatin assembly. In vitro it appears to form a high molecular mass aggregate with the core histones. This is Nucleoplasmin-like protein (Nlp) from Drosophila melanogaster (Fruit fly).